A 64-amino-acid polypeptide reads, in one-letter code: Prokaryotic ubiquitin-like protein Pup (64 aa).

The segment covering 1 to 10 has biased composition (polar residues); sequence MNQNGSQIHS. The disordered stretch occupies residues 1–32; that stretch reads MNQNGSQIHSDGNGHSDDTDTPGVSAGQVSVN. The ARC ATPase binding stretch occupies residues 20–58; sequence DTPGVSAGQVSVNTAGVDDLLDEIDGLLESNAEEFVRSY. Residue Gln-64 is modified to Deamidated glutamine. An Isoglutamyl lysine isopeptide (Gln-Lys) (interchain with K-? in acceptor proteins) cross-link involves residue Gln-64.

It belongs to the prokaryotic ubiquitin-like protein family. Strongly interacts with the proteasome-associated ATPase ARC through a hydrophobic interface; the interacting region of Pup lies in its C-terminal half. There is one Pup binding site per ARC hexamer ring. In terms of processing, is modified by deamidation of its C-terminal glutamine to glutamate by the deamidase Dop, a prerequisite to the subsequent pupylation process.

Its pathway is protein degradation; proteasomal Pup-dependent pathway. Protein modifier that is covalently attached to lysine residues of substrate proteins, thereby targeting them for proteasomal degradation. The tagging system is termed pupylation. This is Prokaryotic ubiquitin-like protein Pup from Corynebacterium diphtheriae (strain ATCC 700971 / NCTC 13129 / Biotype gravis).